Here is a 630-residue protein sequence, read N- to C-terminus: Replication protein A 70 kDa DNA-binding subunit B (630 aa).

The segment at residues 200–282 is a DNA-binding region (OB); it reads IIKVRVTSKG…KTVHNDYEMT (83 aa). A C4-type zinc finger spans residues 496–516; that stretch reads CKTCNKKVTEAIGSGYWCEGC.

The protein belongs to the replication factor A protein 1 family. Heterotrimer of RPA1, RPA2 and RPA3 (canonical replication protein A complex). Interacts with RPA2A. Expressed in root tips, roots, shoot apical meristem (SAM) and young leaves, and at lower levels in mature leaves, flag leaves and ears.

Its subcellular location is the nucleus. Functionally, component of the replication protein A complex (RPA) required for DNA recombination, repair and replication. The activity of RPA is mediated by single-stranded DNA binding and protein interactions. Probably involved in repair of double-strand DNA breaks (DSBs) induced by genotoxic stresses. This is Replication protein A 70 kDa DNA-binding subunit B (RPA1B) from Oryza sativa subsp. japonica (Rice).